Here is a 201-residue protein sequence, read N- to C-terminus: Guanylate kinase (201 aa).

The 180-residue stretch at 7 to 186 folds into the Guanylate kinase-like domain; it reads GVLLVLSSPS…SVEEISSILN (180 aa). 14–21 serves as a coordination point for ATP; sequence SPSGAGKT.

This sequence belongs to the guanylate kinase family.

It is found in the cytoplasm. The enzyme catalyses GMP + ATP = GDP + ADP. In terms of biological role, essential for recycling GMP and indirectly, cGMP. The sequence is that of Guanylate kinase from Wolbachia pipientis wMel.